Reading from the N-terminus, the 540-residue chain is NADH-quinone oxidoreductase subunit N 1 (540 aa).

13 consecutive transmembrane segments (helical) span residues 11–31 (ILPELMLLLLGLLVLGSDVLT), 52–72 (AVGLGLVFIVGLVQSRFLFTV), 109–129 (FTMIARLTFIGAAFLTTLLAM), 142–162 (ALLIFSTLGMSIMAAATEFIL), 195–215 (FLFGSLSSAIFLYGISLTYGF), 250–270 (LILGMLFIIAGLGYKISVVPF), 284–306 (PVTAFLSTASKAAGFLLLYRLLT), 324–344 (WTSILAILALVTVIVGNLAAL), 352–372 (LLAYSSIGHAGFLLLAVLLWA), 386–406 (LIYYLIVYSLTNLGSFGVLAV), 431–451 (LMMTILILSLAGIPPLAGFWA), 464–486 (AVPLVTIAVIMTVVSLYYYLRFL), and 508–528 (AAIILSTVLVVLLGLLPNLIW).

It belongs to the complex I subunit 2 family. As to quaternary structure, NDH-1 is composed of 14 different subunits. Subunits NuoA, H, J, K, L, M, N constitute the membrane sector of the complex.

Its subcellular location is the cell membrane. The enzyme catalyses a quinone + NADH + 5 H(+)(in) = a quinol + NAD(+) + 4 H(+)(out). Functionally, NDH-1 shuttles electrons from NADH, via FMN and iron-sulfur (Fe-S) centers, to quinones in the respiratory chain. The immediate electron acceptor for the enzyme in this species is believed to be ubiquinone. Couples the redox reaction to proton translocation (for every two electrons transferred, four hydrogen ions are translocated across the cytoplasmic membrane), and thus conserves the redox energy in a proton gradient. This is NADH-quinone oxidoreductase subunit N 1 from Roseiflexus castenholzii (strain DSM 13941 / HLO8).